Consider the following 860-residue polypeptide: Leucine--tRNA ligase (860 aa).

The short motif at 42–52 (PYPSGRLHMGH) is the 'HIGH' region element. The 'KMSKS' region signature appears at 619–623 (KMSKS). An ATP-binding site is contributed by lysine 622.

Belongs to the class-I aminoacyl-tRNA synthetase family.

The protein localises to the cytoplasm. It catalyses the reaction tRNA(Leu) + L-leucine + ATP = L-leucyl-tRNA(Leu) + AMP + diphosphate. The protein is Leucine--tRNA ligase of Proteus mirabilis (strain HI4320).